The sequence spans 87 residues: U14-lycotoxin-Ls1a (87 aa).

The first 20 residues, 1–20 (MNSKVFAVLLLLALLTCVLS), serve as a signal peptide directing secretion. Residues 21-66 (EKYCPTPRNTSCKKMNIRNNCCRDSDCTSNAFCCAEPCGNFCHKAS) form the WAP domain. 5 cysteine pairs are disulfide-bonded: Cys-24–Cys-54, Cys-32–Cys-58, Cys-41–Cys-53, Cys-42–Cys-80, and Cys-47–Cys-62.

The protein belongs to the venom protein 11 family. 01 (wap-1) subfamily. Post-translationally, contains 5 disulfide bonds. Expressed by the venom gland.

It localises to the secreted. Functionally, has antibacterial activity. This chain is U14-lycotoxin-Ls1a, found in Lycosa singoriensis (Wolf spider).